The following is a 370-amino-acid chain: DNA replication and repair protein RecF (370 aa).

ATP is bound at residue 33-40; the sequence is GPNAAGKT.

The protein belongs to the RecF family.

The protein resides in the cytoplasm. In terms of biological role, the RecF protein is involved in DNA metabolism; it is required for DNA replication and normal SOS inducibility. RecF binds preferentially to single-stranded, linear DNA. It also seems to bind ATP. The sequence is that of DNA replication and repair protein RecF from Moorella thermoacetica (strain ATCC 39073 / JCM 9320).